Consider the following 1044-residue polypeptide: Carbamoyl phosphate synthase large chain (1044 aa).

The carboxyphosphate synthetic domain stretch occupies residues 1–398; the sequence is MPKREDISKI…ALMKAIASLD (398 aa). Residues Arg-129, Arg-169, Gly-175, Gly-176, Arg-208, Leu-210, Glu-215, Gly-241, Val-242, His-243, Gln-284, and Glu-296 each coordinate ATP. Positions 133 to 325 constitute an ATP-grasp 1 domain; the sequence is HDFLISIGER…IARIAAKIAV (193 aa). Mg(2+)-binding residues include Gln-284, Glu-296, and Asn-298. Mn(2+)-binding residues include Gln-284, Glu-296, and Asn-298. Residues 399-539 are oligomerization domain; that stretch reads IDLSYRLRLY…YSTYEDEDEL (141 aa). A carbamoyl phosphate synthetic domain region spans residues 540 to 916; the sequence is PGISGFVAII…AIRKSILRDI (377 aa). An ATP-grasp 2 domain is found at 665–854; it reads SKRLEAMGID…WVELAVSAIM (190 aa). ATP-binding residues include Arg-701, Lys-738, Leu-740, Glu-745, Gly-770, Val-771, His-772, Ser-773, Gln-813, and Glu-825. Positions 813, 825, and 827 each coordinate Mg(2+). Positions 813, 825, and 827 each coordinate Mn(2+). The MGS-like domain maps to 911–1044; the sequence is SILRDIKSVF…IDYREISSYH (134 aa). The allosteric domain stretch occupies residues 916–1044; it reads IKSVFISVRD…IDYREISSYH (129 aa).

It belongs to the CarB family. In terms of assembly, composed of two chains; the small (or glutamine) chain promotes the hydrolysis of glutamine to ammonia, which is used by the large (or ammonia) chain to synthesize carbamoyl phosphate. Tetramer of heterodimers (alpha,beta)4. The cofactor is Mg(2+). Mn(2+) serves as cofactor.

The enzyme catalyses hydrogencarbonate + L-glutamine + 2 ATP + H2O = carbamoyl phosphate + L-glutamate + 2 ADP + phosphate + 2 H(+). The catalysed reaction is hydrogencarbonate + NH4(+) + 2 ATP = carbamoyl phosphate + 2 ADP + phosphate + 2 H(+). Its pathway is amino-acid biosynthesis; L-arginine biosynthesis; carbamoyl phosphate from bicarbonate: step 1/1. It functions in the pathway pyrimidine metabolism; UMP biosynthesis via de novo pathway; (S)-dihydroorotate from bicarbonate: step 1/3. In terms of biological role, large subunit of the glutamine-dependent carbamoyl phosphate synthetase (CPSase). CPSase catalyzes the formation of carbamoyl phosphate from the ammonia moiety of glutamine, carbonate, and phosphate donated by ATP, constituting the first step of 2 biosynthetic pathways, one leading to arginine and/or urea and the other to pyrimidine nucleotides. The large subunit (synthetase) binds the substrates ammonia (free or transferred from glutamine from the small subunit), hydrogencarbonate and ATP and carries out an ATP-coupled ligase reaction, activating hydrogencarbonate by forming carboxy phosphate which reacts with ammonia to form carbamoyl phosphate. The protein is Carbamoyl phosphate synthase large chain of Thermoplasma volcanium (strain ATCC 51530 / DSM 4299 / JCM 9571 / NBRC 15438 / GSS1).